The primary structure comprises 141 residues: Large ribosomal subunit protein uL16 (141 aa).

The protein belongs to the universal ribosomal protein uL16 family. As to quaternary structure, part of the 50S ribosomal subunit.

Binds 23S rRNA and is also seen to make contacts with the A and possibly P site tRNAs. The sequence is that of Large ribosomal subunit protein uL16 from Nostoc punctiforme (strain ATCC 29133 / PCC 73102).